We begin with the raw amino-acid sequence, 487 residues long: Probable Xaa-Pro aminopeptidase CPSG_02684 (487 aa).

The span at 1–10 (MAGSNTLSSS) shows a compositional bias: polar residues. The disordered stretch occupies residues 1 to 22 (MAGSNTLSSSEHGDDPRGHSYS). The Mn(2+) site is built by Asp-275, Asp-286, Glu-421, and Glu-460.

This sequence belongs to the peptidase M24B family. Mn(2+) is required as a cofactor.

The catalysed reaction is Release of any N-terminal amino acid, including proline, that is linked to proline, even from a dipeptide or tripeptide.. In terms of biological role, catalyzes the removal of a penultimate prolyl residue from the N-termini of peptides. The chain is Probable Xaa-Pro aminopeptidase CPSG_02684 from Coccidioides posadasii (strain RMSCC 757 / Silveira) (Valley fever fungus).